Reading from the N-terminus, the 98-residue chain is Trp operon repressor homolog (98 aa).

A DNA-binding region spans residues 59–82; it reads QRQVSQMLGVGVATITRGSNELKA.

It belongs to the TrpR family. As to quaternary structure, homodimer.

It is found in the cytoplasm. Functionally, this protein is an aporepressor. When complexed with L-tryptophan it binds the operator region of the trp operon and prevents the initiation of transcription. This chain is Trp operon repressor homolog, found in Vibrio atlanticus (strain LGP32) (Vibrio splendidus (strain Mel32)).